We begin with the raw amino-acid sequence, 466 residues long: Putative multidrug resistance protein MdtD (466 aa).

A run of 14 helical transmembrane segments spans residues 11–31, 48–68, 71–91, 105–125, 137–157, 164–184, 194–214, 218–238, 262–282, 292–312, 328–347, 351–370, 402–422, and 429–449; these read LWIV…VNTA, SVIV…GWLA, IGVK…SLLC, VIQG…VMKI, FVTL…GFLV, WIFL…WFLM, FDIS…LALD, SLGI…IALL, FSIG…LPFM, GFSP…SMGI, VLVA…ALVA, WIWM…AIRF, SLGV…HIAA, and TVFL…ALIF.

It belongs to the major facilitator superfamily. TCR/Tet family.

The protein localises to the cell inner membrane. The protein is Putative multidrug resistance protein MdtD of Pectobacterium atrosepticum (strain SCRI 1043 / ATCC BAA-672) (Erwinia carotovora subsp. atroseptica).